Consider the following 395-residue polypeptide: S-adenosylmethionine synthase (395 aa).

Residue His14 participates in ATP binding. Asp16 contacts Mg(2+). Glu42 lines the K(+) pocket. Residues Glu55 and Gln98 each contribute to the L-methionine site. Residues 98–108 (QSPDIALGVDK) are flexible loop. Residues 174–176 (DGK), 240–241 (RF), Asp249, 255–256 (RK), Ala272, and Lys276 each bind ATP. Asp249 is a binding site for L-methionine. Lys280 serves as a coordination point for L-methionine.

It belongs to the AdoMet synthase family. In terms of assembly, homotetramer; dimer of dimers. It depends on Mg(2+) as a cofactor. K(+) is required as a cofactor.

The protein localises to the cytoplasm. It carries out the reaction L-methionine + ATP + H2O = S-adenosyl-L-methionine + phosphate + diphosphate. It functions in the pathway amino-acid biosynthesis; S-adenosyl-L-methionine biosynthesis; S-adenosyl-L-methionine from L-methionine: step 1/1. Functionally, catalyzes the formation of S-adenosylmethionine (AdoMet) from methionine and ATP. The overall synthetic reaction is composed of two sequential steps, AdoMet formation and the subsequent tripolyphosphate hydrolysis which occurs prior to release of AdoMet from the enzyme. This Thermotoga maritima (strain ATCC 43589 / DSM 3109 / JCM 10099 / NBRC 100826 / MSB8) protein is S-adenosylmethionine synthase.